Reading from the N-terminus, the 139-residue chain is Protein COLD-REGULATED 15A, chloroplastic (139 aa).

The N-terminal 40 residues, 1-40 (MAMSFSGAVLTGMASSFHSGAKQSSFGAVRVGQKTQFVVV), are a transit peptide targeting the chloroplast.

Belongs to the COR15 protein family. As to quaternary structure, forms homooligomers which interact with potential stromal substrates in the stroma of chloroplasts. Interacts with the galactose headgroup of the chloroplast lipid monogalactosyldiacylglycerol (MGDG).

Its subcellular location is the plastid. It localises to the chloroplast stroma. Exhibits cryoprotective activity toward stromal substrates (e.g. LDH and rubisco) in chloroplasts and in protoplasts and confers freezing tolerance to plants in a CBF-dependent manner. Protectant against various stresses (e.g. cold, drought and heat stress) by preventing protein aggregation (e.g. LDH) and attenuating enzyme inactivation. Influences the intrinsic curvature of the inner membrane of the chloroplast envelope, and modulates the freeze-induced lamellar-to-hexagonal II phase transitions that occur in regions where the plasma membrane is brought into close apposition with the chloroplast envelope during freeze-induced osmotic contraction. Mediates a shift in the melting curves of phospholipids-containing membranes to lower temperatures. Involved in the regulation of leaf senescence by abscisic acid (ABA) in a VNI2-dependent manner. The chain is Protein COLD-REGULATED 15A, chloroplastic from Arabidopsis thaliana (Mouse-ear cress).